The following is a 154-amino-acid chain: NAD(P)H-quinone oxidoreductase subunit N (154 aa).

Belongs to the complex I NdhN subunit family. In terms of assembly, NDH-1 can be composed of about 15 different subunits; different subcomplexes with different compositions have been identified which probably have different functions.

The protein resides in the cellular thylakoid membrane. It catalyses the reaction a plastoquinone + NADH + (n+1) H(+)(in) = a plastoquinol + NAD(+) + n H(+)(out). The catalysed reaction is a plastoquinone + NADPH + (n+1) H(+)(in) = a plastoquinol + NADP(+) + n H(+)(out). Functionally, NDH-1 shuttles electrons from an unknown electron donor, via FMN and iron-sulfur (Fe-S) centers, to quinones in the respiratory and/or the photosynthetic chain. The immediate electron acceptor for the enzyme in this species is believed to be plastoquinone. Couples the redox reaction to proton translocation, and thus conserves the redox energy in a proton gradient. Cyanobacterial NDH-1 also plays a role in inorganic carbon-concentration. The sequence is that of NAD(P)H-quinone oxidoreductase subunit N from Prochlorococcus marinus (strain NATL2A).